The chain runs to 812 residues: Fibrous sheath CABYR-binding protein (812 aa).

The interval 1-66 (MEESDEPEQP…SIGNIPGGKA (66 aa)) is disordered. Phosphoserine is present on residues serine 25, serine 57, serine 125, serine 133, serine 184, and serine 273. 4 disordered regions span residues 269–333 (IQAP…PKGT), 367–388 (DSGRAESTTVEEATGEVQPPLS), 424–547 (FEDQ…PPSL), and 672–741 (PAEE…PSVK). Over residues 275–286 (AKETSAAETTAK) the composition is skewed to low complexity. A compositionally biased stretch (pro residues) spans 488–501 (EVPPLPTEEWPLPP). A compositionally biased stretch (low complexity) spans 502-513 (VTEESPAEVTPP). Residues 514 to 528 (ETEEGPIEPAEEGPE) are compositionally biased toward acidic residues.

In terms of assembly, interacts with CABYR.

It is found in the cell projection. The protein localises to the cilium. Its subcellular location is the flagellum. In terms of biological role, may be involved in the later stages of fibrous sheath biogenesis. Binds calcium. The sequence is that of Fibrous sheath CABYR-binding protein from Rattus norvegicus (Rat).